The chain runs to 318 residues: UAP56-interacting factor (318 aa).

N-acetylmethionine is present on M1. The disordered stretch occupies residues 1–25 (MNRFGTRLVGATATSSPPPKARSNE). Residue T14 is modified to Phosphothreonine. Residues S16 and S23 each carry the phosphoserine modification. Residues 26-44 (NLDKIDMSLDDIIKLNRKE) carry the UAP56-binding motif motif. Phosphoserine is present on S61. The segment at 79-100 (GFGKTSLNRRGRVMPGKRRPNG) is disordered. Positions 85–98 (LNRRGRVMPGKRRP) are enriched in basic residues. Residue S118 is modified to Phosphoserine. K140 is covalently cross-linked (Glycyl lysine isopeptide (Lys-Gly) (interchain with G-Cter in SUMO1)). A Glycyl lysine isopeptide (Lys-Gly) (interchain with G-Cter in SUMO2) cross-link involves residue K261.

It belongs to the UIF family. As to quaternary structure, interacts with CHTOP. Interacts with DDX39B/UAP56 and NXF1; interaction with DDX39B/UAP56 and NXF1 are mutually exclusive. Interacts with SSRP1; required for its recruitment to mRNAs. In terms of tissue distribution, expressed in a wide variety of cancer types.

The protein resides in the nucleus. Its subcellular location is the nucleoplasm. It localises to the nucleus speckle. Its function is as follows. Required for mRNA export from the nucleus to the cytoplasm. Acts as an adapter that uses the DDX39B/UAP56-NFX1 pathway to ensure efficient mRNA export and delivering to the nuclear pore. Associates with spliced and unspliced mRNAs simultaneously with ALYREF/THOC4. This chain is UAP56-interacting factor (FYTTD1), found in Homo sapiens (Human).